Consider the following 324-residue polypeptide: tRNA N6-adenosine threonylcarbamoyltransferase (324 aa).

Positions 107, 111, and 128 each coordinate Fe cation. Residues 128 to 132 (YVSGG), Asp160, Gly173, Glu177, and Asn256 each bind substrate. Residue Asp284 coordinates Fe cation.

It belongs to the KAE1 / TsaD family. In terms of assembly, monomer. Component of the KEOPS complex that consists of Kae1, Bud32, Cgi121 and Pcc1; the whole complex dimerizes. It depends on Fe(2+) as a cofactor.

It is found in the cytoplasm. It catalyses the reaction L-threonylcarbamoyladenylate + adenosine(37) in tRNA = N(6)-L-threonylcarbamoyladenosine(37) in tRNA + AMP + H(+). Required for the formation of a threonylcarbamoyl group on adenosine at position 37 (t(6)A37) in tRNAs that read codons beginning with adenine. Is a component of the KEOPS complex that is probably involved in the transfer of the threonylcarbamoyl moiety of threonylcarbamoyl-AMP (TC-AMP) to the N6 group of A37. Kae1 likely plays a direct catalytic role in this reaction, but requires other protein(s) of the complex to fulfill this activity. The polypeptide is tRNA N6-adenosine threonylcarbamoyltransferase (Methanothrix thermoacetophila (strain DSM 6194 / JCM 14653 / NBRC 101360 / PT) (Methanosaeta thermophila)).